We begin with the raw amino-acid sequence, 574 residues long: Developmental and secondary metabolism regulator veA (574 aa).

4 disordered regions span residues 1–22 (MATRAPLAPPPNETEASVSRIT), 39–60 (ERARACGAGAKSSADRRPVDPP), 255–500 (RSSD…GAGK), and 513–540 (RSYEDSFGHDDRPLYNGMRPDTESYPRR). In terms of domain architecture, Velvet spans 25–230 (GKKLTYKLNV…AEQGCRVRIR (206 aa)). A Nuclear localization signal motif is present at residues 39-44 (ERARAC). Composition is skewed to pro residues over residues 314–323 (RPLPPAPGPA) and 330–341 (PAPPAPPAPPSH). Polar residues-rich tracts occupy residues 343–353 (PGYQSHLSFGS), 385–394 (HARNPSTSAE), 406–415 (RMSTERSSYP), and 448–458 (VAQSAAPRSQT). Residues 457–501 (QTPSSSLVPSLPPLKALSGDYPNNLSQSSSSTSQSPSHDLGAGKK) are PEST. Composition is skewed to low complexity over residues 459 to 474 (PSSSLVPSLPPLKALS) and 482 to 493 (SQSSSSTSQSPS). Residues 513–525 (RSYEDSFGHDDRP) are compositionally biased toward basic and acidic residues.

It belongs to the velvet family. VeA subfamily. Component of the heterotrimeric velvet complex composed of laeA, veA and velB; VeA acting as a bridging protein between laeA and velB.

Its subcellular location is the nucleus. The protein resides in the cytoplasm. Component of the velvet transcription factor complex that controls sexual/asexual developmental ratio in response to light, promoting sexual development in the darkness while stimulating asexual sporulation under illumination. The velvet complex hat acts as a global regulator for secondary metabolite gene expression. Controls the expression of the penicillin gene cluster. In Aspergillus oryzae (strain ATCC 42149 / RIB 40) (Yellow koji mold), this protein is Developmental and secondary metabolism regulator veA.